Here is a 322-residue protein sequence, read N- to C-terminus: Ferredoxin--NADP reductase (322 aa).

Positions 37, 45, 50, 91, 128, and 290 each coordinate FAD.

This sequence belongs to the ferredoxin--NADP reductase type 2 family. As to quaternary structure, homodimer. FAD serves as cofactor.

It carries out the reaction 2 reduced [2Fe-2S]-[ferredoxin] + NADP(+) + H(+) = 2 oxidized [2Fe-2S]-[ferredoxin] + NADPH. In Malacoplasma penetrans (strain HF-2) (Mycoplasma penetrans), this protein is Ferredoxin--NADP reductase.